The sequence spans 354 residues: Protein RecA (354 aa).

67-74 (GPESSGKT) serves as a coordination point for ATP. A disordered region spans residues 333 to 354 (MNEFVPSSEEQAEASLSEDHDQ).

Belongs to the RecA family.

Its subcellular location is the cytoplasm. Functionally, can catalyze the hydrolysis of ATP in the presence of single-stranded DNA, the ATP-dependent uptake of single-stranded DNA by duplex DNA, and the ATP-dependent hybridization of homologous single-stranded DNAs. It interacts with LexA causing its activation and leading to its autocatalytic cleavage. The chain is Protein RecA from Laribacter hongkongensis (strain HLHK9).